Consider the following 275-residue polypeptide: MPLMKFKPTSPGRRSAVRVVTPDLHKGAPHAALLDSQSKSGGRNHHGRITVRHVGGGHKQHYRIIDFKRNKEGIPARVERIEYDPNRTAHIALLCYVDGERRYIIAPKGLKAGDQVIAGANAPIKTGNTLPLRNIPVGTTVHGIELKPGKGAQIARAAGAAVQLVAREGIYATLRLRSGEMRKVPVECRATIGEVGNDEHNLEKLGKAGAKRWRGVRPTVRGAAMNPVDHPHGGGEAKAGQGNPHPVTPWGVPTKGYKTRKNKRTQQFIVRDRRG.

Residues 224 to 275 are disordered; it reads AMNPVDHPHGGGEAKAGQGNPHPVTPWGVPTKGYKTRKNKRTQQFIVRDRRG.

This sequence belongs to the universal ribosomal protein uL2 family. In terms of assembly, part of the 50S ribosomal subunit. Forms a bridge to the 30S subunit in the 70S ribosome.

One of the primary rRNA binding proteins. Required for association of the 30S and 50S subunits to form the 70S ribosome, for tRNA binding and peptide bond formation. It has been suggested to have peptidyltransferase activity; this is somewhat controversial. Makes several contacts with the 16S rRNA in the 70S ribosome. In Xanthomonas axonopodis pv. citri (strain 306), this protein is Large ribosomal subunit protein uL2.